A 254-amino-acid chain; its full sequence is MTPLICAADLSVSHGGDLPVLSHVDFLIRPGEIVTVVGPNGSGKSTLVRALLGHVSLSSGRVERVPGLRIGYVPQRVHIERAMPMTVRRFLSLPRRVGDAQAAAALERTGVPGLEGRQITALSGGQFQRVLLARALLGDPQLLVLDEPTQGLDQPGIVAFYKLIEEVRAETRAAVLMVSHDLLVVMRASDRVVCLNGHICCEGTPQAVSAAPAYRALFGSEAQGTLALYQHHHDHDHDHVAEGHRHGPACAHPH.

The ABC transporter domain maps to 5–221 (ICAADLSVSH…PAYRALFGSE (217 aa)). 38–45 (GPNGSGKS) is a binding site for ATP. The segment covering 234–245 (DHDHDHVAEGHR) has biased composition (basic and acidic residues). The segment at 234 to 254 (DHDHDHVAEGHRHGPACAHPH) is disordered.

This sequence belongs to the ABC transporter superfamily. Zinc importer (TC 3.A.1.15.5) family. As to quaternary structure, the complex is composed of two ATP-binding proteins (ZnuC), two transmembrane proteins (ZnuB) and a solute-binding protein (ZnuA).

It is found in the cell inner membrane. It carries out the reaction Zn(2+)(out) + ATP(in) + H2O(in) = Zn(2+)(in) + ADP(in) + phosphate(in) + H(+)(in). Part of the ABC transporter complex ZnuABC involved in zinc import. Responsible for energy coupling to the transport system. This is Zinc import ATP-binding protein ZnuC from Paracoccus denitrificans (strain Pd 1222).